A 918-amino-acid polypeptide reads, in one-letter code: Protein translocase subunit SecA (918 aa).

Residues Gln87, Gly105–Thr109, and Asp516 contribute to the ATP site. 4 residues coordinate Zn(2+): Cys902, Cys904, Cys913, and His914.

Belongs to the SecA family. As to quaternary structure, monomer and homodimer. Part of the essential Sec protein translocation apparatus which comprises SecA, SecYEG and auxiliary proteins SecDF-YajC and YidC. Zn(2+) serves as cofactor.

Its subcellular location is the cell inner membrane. The protein resides in the cytoplasm. It catalyses the reaction ATP + H2O + cellular proteinSide 1 = ADP + phosphate + cellular proteinSide 2.. Functionally, part of the Sec protein translocase complex. Interacts with the SecYEG preprotein conducting channel. Has a central role in coupling the hydrolysis of ATP to the transfer of proteins into and across the cell membrane, serving both as a receptor for the preprotein-SecB complex and as an ATP-driven molecular motor driving the stepwise translocation of polypeptide chains across the membrane. The sequence is that of Protein translocase subunit SecA from Methylibium petroleiphilum (strain ATCC BAA-1232 / LMG 22953 / PM1).